A 100-amino-acid polypeptide reads, in one-letter code: NAD(P)H-quinone oxidoreductase subunit 4L, chloroplastic (100 aa).

Transmembrane regions (helical) follow at residues 1–21, 31–51, and 60–80; these read MLEH…YGLI, ICLE…SDFF, and IFAI…LAIL.

Belongs to the complex I subunit 4L family. NDH is composed of at least 16 different subunits, 5 of which are encoded in the nucleus.

Its subcellular location is the plastid. It localises to the chloroplast thylakoid membrane. The enzyme catalyses a plastoquinone + NADH + (n+1) H(+)(in) = a plastoquinol + NAD(+) + n H(+)(out). It carries out the reaction a plastoquinone + NADPH + (n+1) H(+)(in) = a plastoquinol + NADP(+) + n H(+)(out). In terms of biological role, NDH shuttles electrons from NAD(P)H:plastoquinone, via FMN and iron-sulfur (Fe-S) centers, to quinones in the photosynthetic chain and possibly in a chloroplast respiratory chain. The immediate electron acceptor for the enzyme in this species is believed to be plastoquinone. Couples the redox reaction to proton translocation, and thus conserves the redox energy in a proton gradient. In Trachelium caeruleum (Blue throatwort), this protein is NAD(P)H-quinone oxidoreductase subunit 4L, chloroplastic.